We begin with the raw amino-acid sequence, 204 residues long: Holliday junction branch migration complex subunit RuvA (204 aa).

The domain I stretch occupies residues 1–64 (MIGKLKGTID…EDQLKLFGFM (64 aa)). Positions 65-143 (TALEREWFNL…AFAGEAINIA (79 aa)) are domain II. The segment at 144–151 (LKQELGEG) is flexible linker. The tract at residues 152-204 (VAAAPVADAVSALTNLGYSRDQAANAVAAAMKTAGDGADSAKLIRLGLKELAR) is domain III.

Belongs to the RuvA family. Homotetramer. Forms an RuvA(8)-RuvB(12)-Holliday junction (HJ) complex. HJ DNA is sandwiched between 2 RuvA tetramers; dsDNA enters through RuvA and exits via RuvB. An RuvB hexamer assembles on each DNA strand where it exits the tetramer. Each RuvB hexamer is contacted by two RuvA subunits (via domain III) on 2 adjacent RuvB subunits; this complex drives branch migration. In the full resolvosome a probable DNA-RuvA(4)-RuvB(12)-RuvC(2) complex forms which resolves the HJ.

It is found in the cytoplasm. Its function is as follows. The RuvA-RuvB-RuvC complex processes Holliday junction (HJ) DNA during genetic recombination and DNA repair, while the RuvA-RuvB complex plays an important role in the rescue of blocked DNA replication forks via replication fork reversal (RFR). RuvA specifically binds to HJ cruciform DNA, conferring on it an open structure. The RuvB hexamer acts as an ATP-dependent pump, pulling dsDNA into and through the RuvAB complex. HJ branch migration allows RuvC to scan DNA until it finds its consensus sequence, where it cleaves and resolves the cruciform DNA. This chain is Holliday junction branch migration complex subunit RuvA, found in Rhizobium etli (strain CIAT 652).